The sequence spans 687 residues: Leucine-rich repeat and fibronectin type III domain-containing protein 1-like protein (687 aa).

A signal peptide spans 1 to 17 (MEWLIFSLLLLAVSASG). One can recognise an LRRNT domain in the interval 18–51 (QLCPKRCMCQNLSPSLAILCAKTGLLFVPTVIDR). The Extracellular portion of the chain corresponds to 18–527 (QLCPKRCMCQ…LRSHFLGGTM (510 aa)). LRR repeat units lie at residues 52 to 73 (RTVE…DFAN), 76 to 97 (SLLH…TFAD), 100 to 121 (RLRA…HFRG), 124 to 145 (NLRH…AFDD), 149 to 170 (TLED…TIGR), 173 to 194 (NVNT…IFSN), and 197 to 218 (KLAR…PLFL). An N-linked (GlcNAc...) asparagine glycan is attached at Asn-73. The region spanning 241-287 (NPLHCNCELLWLRRLTREDDLETCASPPDLTAKYFWTIPEEEFICDP) is the LRRCT domain. The Ig-like domain maps to 287 to 376 (PPVITRKSPK…STGTVELVVS (90 aa)). A disulfide bond links Cys-309 and Cys-358. Residues Asn-331, Asn-340, Asn-346, Asn-383, Asn-410, and Asn-450 are each glycosylated (N-linked (GlcNAc...) asparagine). A disordered region spans residues 384–412 (STNRIREPDPGPSDILTSAKSTSSVSNET). A compositionally biased stretch (polar residues) spans 398-412 (ILTSAKSTSSVSNET). The region spanning 415 to 510 (QERKVVLAEL…VGCVTFVTET (96 aa)) is the Fibronectin type-III domain. Residues 528–548 (IIIIGGIIVASVLVFIIILMI) traverse the membrane as a helical segment. Residues 549–687 (RYKVYSQHGA…AQRDWSDFKI (139 aa)) are Cytoplasmic-facing. Disordered stretches follow at residues 563 to 601 (GTAM…GSLG) and 630 to 687 (EDIV…DFKI). Composition is skewed to polar residues over residues 565-576 (AMTNVRSQTNGG) and 657-672 (EGTS…SPQV). Residues 673–687 (SDEKKAQRDWSDFKI) are compositionally biased toward basic and acidic residues.

The protein belongs to the LRFN family.

It localises to the membrane. The protein localises to the synapse. Its function is as follows. May be involved in the regulation of excitatory synapses. This Danio rerio (Zebrafish) protein is Leucine-rich repeat and fibronectin type III domain-containing protein 1-like protein (lrfn1l).